Consider the following 173-residue polypeptide: 2-C-methyl-D-erythritol 2,4-cyclodiphosphate synthase (173 aa).

A divalent metal cation contacts are provided by aspartate 17 and histidine 19. Residues 17-19 and 49-50 each bind 4-CDP-2-C-methyl-D-erythritol 2-phosphate; these read DVH and HS. Histidine 57 is a binding site for a divalent metal cation. Residues 76–80, 147–150, and arginine 157 contribute to the 4-CDP-2-C-methyl-D-erythritol 2-phosphate site; these read FPNTD and TTTE.

It belongs to the IspF family. In terms of assembly, homotrimer. The cofactor is a divalent metal cation.

It carries out the reaction 4-CDP-2-C-methyl-D-erythritol 2-phosphate = 2-C-methyl-D-erythritol 2,4-cyclic diphosphate + CMP. The protein operates within isoprenoid biosynthesis; isopentenyl diphosphate biosynthesis via DXP pathway; isopentenyl diphosphate from 1-deoxy-D-xylulose 5-phosphate: step 4/6. Functionally, involved in the biosynthesis of isopentenyl diphosphate (IPP) and dimethylallyl diphosphate (DMAPP), two major building blocks of isoprenoid compounds. Catalyzes the conversion of 4-diphosphocytidyl-2-C-methyl-D-erythritol 2-phosphate (CDP-ME2P) to 2-C-methyl-D-erythritol 2,4-cyclodiphosphate (ME-CPP) with a corresponding release of cytidine 5-monophosphate (CMP). In Ehrlichia ruminantium (strain Welgevonden), this protein is 2-C-methyl-D-erythritol 2,4-cyclodiphosphate synthase.